The chain runs to 79 residues: Sec-independent protein translocase protein TatA (79 aa).

A helical membrane pass occupies residues 1–21 (MGFSTTHLLIFLVIIIVIFGT). Residues 43–63 (KEGSDKAADAPAAAPQQVASS) are disordered. The span at 51 to 63 (DAPAAAPQQVASS) shows a compositional bias: low complexity.

Belongs to the TatA/E family. In terms of assembly, the Tat system comprises two distinct complexes: a TatABC complex, containing multiple copies of TatA, TatB and TatC subunits, and a separate TatA complex, containing only TatA subunits. Substrates initially bind to the TatABC complex, which probably triggers association of the separate TatA complex to form the active translocon.

The protein localises to the cell inner membrane. In terms of biological role, part of the twin-arginine translocation (Tat) system that transports large folded proteins containing a characteristic twin-arginine motif in their signal peptide across membranes. TatA could form the protein-conducting channel of the Tat system. The polypeptide is Sec-independent protein translocase protein TatA (Albidiferax ferrireducens (strain ATCC BAA-621 / DSM 15236 / T118) (Rhodoferax ferrireducens)).